Reading from the N-terminus, the 378-residue chain is UDP-N-acetylglucosamine--N-acetylmuramyl-(pentapeptide) pyrophosphoryl-undecaprenol N-acetylglucosamine transferase (378 aa).

Residues 14 to 16 (TGG), Asn125, Arg165, Ser193, and Gln293 each bind UDP-N-acetyl-alpha-D-glucosamine.

The protein belongs to the glycosyltransferase 28 family. MurG subfamily.

It is found in the cell inner membrane. The catalysed reaction is di-trans,octa-cis-undecaprenyl diphospho-N-acetyl-alpha-D-muramoyl-L-alanyl-D-glutamyl-meso-2,6-diaminopimeloyl-D-alanyl-D-alanine + UDP-N-acetyl-alpha-D-glucosamine = di-trans,octa-cis-undecaprenyl diphospho-[N-acetyl-alpha-D-glucosaminyl-(1-&gt;4)]-N-acetyl-alpha-D-muramoyl-L-alanyl-D-glutamyl-meso-2,6-diaminopimeloyl-D-alanyl-D-alanine + UDP + H(+). The protein operates within cell wall biogenesis; peptidoglycan biosynthesis. Cell wall formation. Catalyzes the transfer of a GlcNAc subunit on undecaprenyl-pyrophosphoryl-MurNAc-pentapeptide (lipid intermediate I) to form undecaprenyl-pyrophosphoryl-MurNAc-(pentapeptide)GlcNAc (lipid intermediate II). The protein is UDP-N-acetylglucosamine--N-acetylmuramyl-(pentapeptide) pyrophosphoryl-undecaprenol N-acetylglucosamine transferase of Bartonella tribocorum (strain CIP 105476 / IBS 506).